Here is a 160-residue protein sequence, read N- to C-terminus: Putative tRNA (cytidine(34)-2'-O)-methyltransferase (160 aa).

Residues I82, G107, L128, and S136 each coordinate S-adenosyl-L-methionine.

It belongs to the class IV-like SAM-binding methyltransferase superfamily. RNA methyltransferase TrmH family. TrmL subfamily.

Its subcellular location is the cytoplasm. It carries out the reaction cytidine(34) in tRNA + S-adenosyl-L-methionine = 2'-O-methylcytidine(34) in tRNA + S-adenosyl-L-homocysteine + H(+). The enzyme catalyses 5-carboxymethylaminomethyluridine(34) in tRNA(Leu) + S-adenosyl-L-methionine = 5-carboxymethylaminomethyl-2'-O-methyluridine(34) in tRNA(Leu) + S-adenosyl-L-homocysteine + H(+). Its function is as follows. Could methylate the ribose at the nucleotide 34 wobble position in tRNA. This is Putative tRNA (cytidine(34)-2'-O)-methyltransferase (cspR) from Bacillus subtilis (strain 168).